The following is a 663-amino-acid chain: MSLFVAVENIEKSFPLSGGNEYLALKGIDLEIKQGEFISLIGHSGCGKSTLLNLIAGLELPTDGAVSLEGQQITAPGPDRMVVFQNYSLFPWLTVRENIALAVDEVLRDLPKEERQAIVEEHIQLVGLGHAADKPPAQLSGGMKQRVAIARGLATRPKLLLLDEPFGALDALTRGNLQEKLMQICEENHVTAVMVTHDVDEAVLLSDRIVMLTNGPGSKIGGILEVDIPRPRKRMDVVHHPSYYSLRSEIIYFLNQQKRVKKLNARKVTTVARHGLEKVNLEIGYVPLMACAPLVVAQEKAFFAKHGLDEVSLVRETSWRGIVDGLTENYLDAAQMPAGMPVWMSVGGQGGSPLPIVSSLTMSRNGNGITLSKALYDEGIQTVDDFRNLLRSTADKQHIMGIVHPASMHNLLLRYWLAANQIDPDRDVQLRTIPPAQMVADLKDGTIDGYCIGEPWNAWAAQKEIGFTIASDLEIWNGHPGKVLGVREDWANRYPNSHVALVKALLEACQYCEDPANWDELRELLSDRRYLSCPKEYIQFSQSTADDLAVPHHRFAGAGVNRPSRTEHLWMMTQLARWGDVPFPRNWVEILERVCRVGVFSTAARELGLSEVVNYQRSTPVELFDGVPFNAEDPIAYLNSLPIHRDFSVAEIALDQPRPIAAA.

An ABC transporter domain is found at 5–239 (VAVENIEKSF…RPRKRMDVVH (235 aa)). 42–49 (GHSGCGKS) is a binding site for ATP. Residues 281–663 (LEIGYVPLMA…LDQPRPIAAA (383 aa)) form a cmpA-like region.

This sequence belongs to the ABC transporter superfamily. Nitrate/nitrite/cyanate uptake transporter (NitT) (TC 3.A.1.16) family. As to quaternary structure, the complex is composed of two ATP-binding proteins (CmpC and CmpD), a transmembrane protein (CmpB) and a solute-binding protein (CmpA).

It is found in the cell inner membrane. Functionally, part of the ABC transporter complex CmpABCD involved in bicarbonate transport. Responsible for energy coupling to the transport system. The sequence is that of Bicarbonate transport ATP-binding protein CmpC (cmpC) from Synechococcus elongatus (strain ATCC 33912 / PCC 7942 / FACHB-805) (Anacystis nidulans R2).